A 124-amino-acid polypeptide reads, in one-letter code: Seripauperin-15 (124 aa).

The first 20 residues, Met-1–Ala-20, serve as a signal peptide directing secretion.

This sequence belongs to the SRP1/TIP1 family. Seripauperin subfamily.

This chain is Seripauperin-15 (PAU15), found in Saccharomyces cerevisiae (strain ATCC 204508 / S288c) (Baker's yeast).